A 188-amino-acid chain; its full sequence is Adenylate kinase (188 aa).

10 to 15 (GCGKGT) is an ATP binding site. An NMP region spans residues 30–59 (STGDMLRHARAAGTELGRRVAAIMDGGNLV). Residues threonine 31, arginine 36, 57 to 59 (NLV), 85 to 88 (GFPR), and glutamine 92 each bind AMP. The tract at residues 126–136 (KRAEEEGRPDD) is LID. Residue arginine 127 participates in ATP binding. 2 residues coordinate AMP: arginine 133 and arginine 144. Glycine 172 is an ATP binding site.

Belongs to the adenylate kinase family. As to quaternary structure, monomer.

The protein resides in the cytoplasm. It catalyses the reaction AMP + ATP = 2 ADP. It functions in the pathway purine metabolism; AMP biosynthesis via salvage pathway; AMP from ADP: step 1/1. In terms of biological role, catalyzes the reversible transfer of the terminal phosphate group between ATP and AMP. Plays an important role in cellular energy homeostasis and in adenine nucleotide metabolism. This chain is Adenylate kinase, found in Maricaulis maris (strain MCS10) (Caulobacter maris).